A 116-amino-acid chain; its full sequence is Large ribosomal subunit protein bL20 (116 aa).

The protein belongs to the bacterial ribosomal protein bL20 family.

Its function is as follows. Binds directly to 23S ribosomal RNA and is necessary for the in vitro assembly process of the 50S ribosomal subunit. It is not involved in the protein synthesizing functions of that subunit. This chain is Large ribosomal subunit protein bL20, found in Phocaeicola vulgatus (strain ATCC 8482 / DSM 1447 / JCM 5826 / CCUG 4940 / NBRC 14291 / NCTC 11154) (Bacteroides vulgatus).